The following is a 336-amino-acid chain: Biotin synthase (336 aa).

Positions 57-286 constitute a Radical SAM core domain; that stretch reads HHGKSIDLCS…RAIVRTAGGR (230 aa). The [4Fe-4S] cluster site is built by Cys-75, Cys-79, and Cys-82. [2Fe-2S] cluster contacts are provided by Ser-119, Cys-151, Cys-211, and Arg-281.

Belongs to the radical SAM superfamily. Biotin synthase family. As to quaternary structure, homodimer. Requires [4Fe-4S] cluster as cofactor. The cofactor is [2Fe-2S] cluster.

It catalyses the reaction (4R,5S)-dethiobiotin + (sulfur carrier)-SH + 2 reduced [2Fe-2S]-[ferredoxin] + 2 S-adenosyl-L-methionine = (sulfur carrier)-H + biotin + 2 5'-deoxyadenosine + 2 L-methionine + 2 oxidized [2Fe-2S]-[ferredoxin]. Its pathway is cofactor biosynthesis; biotin biosynthesis; biotin from 7,8-diaminononanoate: step 2/2. Functionally, catalyzes the conversion of dethiobiotin (DTB) to biotin by the insertion of a sulfur atom into dethiobiotin via a radical-based mechanism. The chain is Biotin synthase from Desulfotalea psychrophila (strain LSv54 / DSM 12343).